Consider the following 446-residue polypeptide: Chromosomal replication initiator protein DnaA (446 aa).

Residues 1–81 (MENISDLWNS…AKLAIRFIIP (81 aa)) are domain I, interacts with DnaA modulators. Residues 81 to 109 (PQSQAEEDIDLPPVKRNPAQDDSAHLPQS) form a domain II region. The interval 110 to 326 (MLNPKYTFDT…GALIRVVAYS (217 aa)) is domain III, AAA+ region. ATP is bound by residues G154, G156, K157, and T158. Positions 327–446 (SLINKDINAD…QVEEINGILK (120 aa)) are domain IV, binds dsDNA.

The protein belongs to the DnaA family. In terms of assembly, oligomerizes as a right-handed, spiral filament on DNA at oriC.

It localises to the cytoplasm. Plays an essential role in the initiation and regulation of chromosomal replication. ATP-DnaA binds to the origin of replication (oriC) to initiate formation of the DNA replication initiation complex once per cell cycle. Binds the DnaA box (a 9 base pair repeat at the origin) and separates the double-stranded (ds)DNA. Forms a right-handed helical filament on oriC DNA; dsDNA binds to the exterior of the filament while single-stranded (ss)DNA is stabiized in the filament's interior. The ATP-DnaA-oriC complex binds and stabilizes one strand of the AT-rich DNA unwinding element (DUE), permitting loading of DNA polymerase. After initiation quickly degrades to an ADP-DnaA complex that is not apt for DNA replication. Binds acidic phospholipids. The polypeptide is Chromosomal replication initiator protein DnaA (Bacillus cereus (strain G9842)).